The chain runs to 1051 residues: Ubiquitin-activating enzyme E1 2 (1051 aa).

Positions 1 to 32 are enriched in basic and acidic residues; the sequence is MLPRKREIVAGEVEDLQKKTRAGEGEATREEG. Residues 1–42 form a disordered region; it reads MLPRKREIVAGEVEDLQKKTRAGEGEATREEGDAAMAGRGNE. Tandem repeats lie at residues 56 to 194 and 453 to 605. The segment at 56–605 is 2 approximate repeats; the sequence is GRETMKPLFG…GAKCNTQMVI (550 aa). Residues alanine 472, aspartate 498, arginine 509, lysine 522, and 570–571 contribute to the ATP site; that span reads DN. Cysteine 626 serves as the catalytic Glycyl thioester intermediate.

Belongs to the ubiquitin-activating E1 family. As to quaternary structure, monomer.

The enzyme catalyses ATP + ubiquitin + [E1 ubiquitin-activating enzyme]-L-cysteine = AMP + diphosphate + S-ubiquitinyl-[E1 ubiquitin-activating enzyme]-L-cysteine.. It participates in protein modification; protein ubiquitination. Functionally, activates ubiquitin by first adenylating its C-terminal glycine residue with ATP, and thereafter linking this residue to the side chain of a cysteine residue in E1, yielding a ubiquitin-E1 thioester and free AMP. This Triticum aestivum (Wheat) protein is Ubiquitin-activating enzyme E1 2 (UBA2).